The chain runs to 400 residues: Acetate kinase (400 aa).

N10 contributes to the Mg(2+) binding site. K17 provides a ligand contact to ATP. R91 provides a ligand contact to substrate. The active-site Proton donor/acceptor is D150. ATP-binding positions include 210–214 (HLGNG), 285–287 (DCR), and 333–337 (GIGEN). E387 is a Mg(2+) binding site.

Belongs to the acetokinase family. In terms of assembly, homodimer. Mg(2+) serves as cofactor. Requires Mn(2+) as cofactor.

The protein resides in the cytoplasm. It carries out the reaction acetate + ATP = acetyl phosphate + ADP. The protein operates within metabolic intermediate biosynthesis; acetyl-CoA biosynthesis; acetyl-CoA from acetate: step 1/2. Catalyzes the formation of acetyl phosphate from acetate and ATP. Can also catalyze the reverse reaction. In Salmonella typhi, this protein is Acetate kinase.